Reading from the N-terminus, the 330-residue chain is Methylthioribose-1-phosphate isomerase (330 aa).

Substrate is bound by residues 49 to 51 (RGA), R83, and Q179. The Proton donor role is filled by D220. Residue 230-231 (NK) participates in substrate binding.

It belongs to the eIF-2B alpha/beta/delta subunits family. MtnA subfamily.

It carries out the reaction 5-(methylsulfanyl)-alpha-D-ribose 1-phosphate = 5-(methylsulfanyl)-D-ribulose 1-phosphate. It functions in the pathway amino-acid biosynthesis; L-methionine biosynthesis via salvage pathway; L-methionine from S-methyl-5-thio-alpha-D-ribose 1-phosphate: step 1/6. Catalyzes the interconversion of methylthioribose-1-phosphate (MTR-1-P) into methylthioribulose-1-phosphate (MTRu-1-P). This chain is Methylthioribose-1-phosphate isomerase, found in Thermus thermophilus (strain ATCC 27634 / DSM 579 / HB8).